The sequence spans 953 residues: Coatomer subunit beta (953 aa).

Thr2 bears the N-acetylthreonine mark. HEAT repeat units follow at residues 96 to 131 (HEMILVCDAYRKDLQHPNEFIRGSTLRFLCKLKEAE), 132 to 168 (LLEPLMPAIRACLEHRHSYVRRNAVLAIYTIYRNFEH), 240 to 276 (SERARFIRCIYNLLQSSSPAVKYEAAGTLVTLSSAPT), 277 to 314 (AIKAAAQCYIDLIIKESDNNVKLIVLDRLVELKEHPAH), 316 to 353 (RVLQDLVMDILRVLSTPDLEVRKKTLQLALDLVSSRNV), and 396 to 433 (DMAANVIPVLMEFLSDSNEAAAADVLEFVREAIQRFDN). The residue at position 494 (Lys494) is an N6-acetyllysine.

Oligomeric complex that consists of at least the alpha, beta, beta', gamma, delta, epsilon and zeta subunits. Interacts with CAPN8. Interacts with SCYL1 and PRKCE. Interacts with COPG1. Interacts with ARF1 (myristoylated); this interaction is required for binding of COPB1 to Golgi membranes. Interacts (via trunk domain) with ARF1 (via switch I region); the interaction is direct. Interacts with KCNK2 (via N-terminus); this interaction increases the channel-mediated whole cell currents and promotes plasma membrane expression of KCNK2. Interacts with STX17. Interacts with TMEM115. Interacts with TMEM41B. Proteolytically cleaved between Ser-528 and Ser-529 by CAPN8. In terms of tissue distribution, predominantly expressed in the upper one-third of the oxyntic mucosa and in most regions of the pyloric mucosa. Ubiquitously expressed including platelet, liver, heart, spleen, lung and kidney.

Its subcellular location is the cytoplasm. The protein resides in the golgi apparatus membrane. It localises to the cytoplasmic vesicle. It is found in the COPI-coated vesicle membrane. The protein localises to the cell membrane. Its subcellular location is the endoplasmic reticulum-Golgi intermediate compartment. Its function is as follows. The coatomer is a cytosolic protein complex that binds to dilysine motifs and reversibly associates with Golgi non-clathrin-coated vesicles, which further mediate biosynthetic protein transport from the ER, via the Golgi up to the trans Golgi network. Coatomer complex is required for budding from Golgi membranes, and is essential for the retrograde Golgi-to-ER transport of dilysine-tagged proteins. In mammals, the coatomer can only be recruited by membranes associated to ADP-ribosylation factors (ARFs), which are small GTP-binding proteins; the complex also influences the Golgi structural integrity, as well as the processing, activity, and endocytic recycling of LDL receptors. Involved in the Golgi disassembly and reassembly processes during cell cycle. Involved in autophagy by playing a role in early endosome function. Plays a role in organellar compartmentalization of secretory compartments including endoplasmic reticulum (ER)-Golgi intermediate compartment (ERGIC), Golgi, trans-Golgi network (TGN) and recycling endosomes, and in biosynthetic transport of CAV1. Plays a functional role in facilitating the transport of kappa-type opioid receptor mRNAs into axons and enhances translation of these proteins in cortical neurons. Required for limiting lipid storage in lipid droplets. Involved in lipid homeostasis by regulating the presence of perilipin family members PLIN2 and PLIN3 at the lipid droplet surface and promoting the association of adipocyte triglyceride lipase (PNPLA2) with the lipid droplet surface to mediate lipolysis. The sequence is that of Coatomer subunit beta (Copb1) from Mus musculus (Mouse).